A 483-amino-acid polypeptide reads, in one-letter code: Regulatory protein ViaA (483 aa).

Belongs to the ViaA family. In terms of assembly, homodimer. Interacts with RavA.

Its subcellular location is the cytoplasm. Its function is as follows. Component of the RavA-ViaA chaperone complex, which may act on the membrane to optimize the function of some of the respiratory chains. ViaA stimulates the ATPase activity of RavA. In Salmonella choleraesuis (strain SC-B67), this protein is Regulatory protein ViaA.